A 1091-amino-acid polypeptide reads, in one-letter code: E3 ubiquitin-protein ligase TRIM33 (1091 aa).

Positions 1 to 13 (MADNKGGGGGGGE) are enriched in gly residues. The interval 1 to 87 (MADNKGGGGG…SATPASSSSS (87 aa)) is disordered. Over residues 52-87 (APVAAVPTDTPAEENPAPSSSSVASSSATPASSSSS) the composition is skewed to low complexity. An RING-type 1 zinc finger spans residues 97 to 154 (CAVCKLSLQSRDTEPKLLPCLHSFCRRCLPEPERQLSVPGGTNGDIQQVGVIRCLVCR). The B box-type 1; atypical zinc finger occupies 180 to 227 (KSEQVCTSCEDNASAVGFCVECGEWLCKTCIEAHQRVKFTKDHIITNK). Residues Cys-185, Cys-188, Cys-209, His-213, Cys-245, His-248, Cys-268, and His-273 each coordinate Zn(2+). Residues 240–281 (QRPVFCPVHKQEQLKLFCETCDRLTCRDCQLLEHKEHRYQFL) form a B box-type 2 zinc finger. Positions 269–361 (QLLEHKEHRY…QLESVTKERQ (93 aa)) form a coiled coil. 2 disordered regions span residues 672 to 779 (LPQP…TPPL) and 821 to 844 (GKSA…GSNK). Low complexity predominate over residues 675 to 721 (PTSNMNPSPAPSAMSPGSTGLSNSHTPVRPPSTSSTGSRGSCGSSSR). Residues 754-763 (KQEKAEDGRR) show a composition bias toward basic and acidic residues. Low complexity predominate over residues 768-779 (LSSPESSLTPPL). A PHD-type zinc finger spans residues 850–897 (EDWCAVCQNGGDLLCCEKCPKVFHLTCHVPTLLSFPSGEWICTFCRDL). A Bromo domain is found at 920-1043 (GLSPVDQMKC…LYFEEKLPAI (124 aa)). Residues 1051-1091 (PLPEFEAEDDDGDVTDDSDDDDFVQPRRKRLKSEERPVHIK) form a disordered region. Acidic residues predominate over residues 1055 to 1073 (FEAEDDDGDVTDDSDDDDF). Residues 1082 to 1091 (KSEERPVHIK) are compositionally biased toward basic and acidic residues.

In terms of assembly, may interact with smad4.

Its subcellular location is the nucleus. It carries out the reaction S-ubiquitinyl-[E2 ubiquitin-conjugating enzyme]-L-cysteine + [acceptor protein]-L-lysine = [E2 ubiquitin-conjugating enzyme]-L-cysteine + N(6)-ubiquitinyl-[acceptor protein]-L-lysine.. Its pathway is protein modification; protein ubiquitination. In terms of biological role, acts as an E3 ubiquitin-protein ligase for smad4. Promotes ectoderm embryonic development at the expense of other germ layers. Inhibits mesodermal differentiation. Promotes neural development of the ectoderm. Promotes smad4 alpha degradation via the ubiquitin proteasome pathway. May act as a transcriptional repressor. This chain is E3 ubiquitin-protein ligase TRIM33 (trim33), found in Xenopus laevis (African clawed frog).